The chain runs to 300 residues: MSYRELVVELAREHAEALSDALLELGALSVSVEDADADTPDEQPLFGEPGLVPERTAWQHSRVIALLSPDHEPAVLLAAAANEIGLDATPKFDVREVEEQDWVRLTQSQFEPIPIGERIWVVPSWHDAPDPDALVLELDPGLAFGTGSHPTTRLCMEWLEQSVQPGQSVLDYGCGSGILAILAKKCGANPVVGIDIDPQAVESARQNSERNRAEVTYGLPDACPAGEFDIVVANILSNPLKLMASMLASKVKPGGRIALSGVLARQADEVAAVYARYVDISVWREHEGWVCLAGTRRESH.

Residues Thr152, Gly173, Asp195, and Asn234 each contribute to the S-adenosyl-L-methionine site.

Belongs to the methyltransferase superfamily. PrmA family.

It is found in the cytoplasm. The catalysed reaction is L-lysyl-[protein] + 3 S-adenosyl-L-methionine = N(6),N(6),N(6)-trimethyl-L-lysyl-[protein] + 3 S-adenosyl-L-homocysteine + 3 H(+). Methylates ribosomal protein L11. In Burkholderia multivorans (strain ATCC 17616 / 249), this protein is Ribosomal protein L11 methyltransferase.